Here is a 391-residue protein sequence, read N- to C-terminus: Leucine-rich repeat-containing protein 74B (391 aa).

Residues 1–38 (MKGPCEVQKNEDQEGEAAATGPQAETLEAERSWTADSH) are disordered. The span at 28 to 38 (EAERSWTADSH) shows a compositional bias: basic and acidic residues. 9 LRR repeats span residues 106–126 (YIKRLDLRDNGLCGAGAEALA), 134–154 (IISDVDLSENQIGAAGLQAIC), 162–182 (TVEKMQLQGNRLEEQAAQHLA), 190–211 (GLKSLDLSYNQLNDLAGEILGP), 218–239 (GLTELNLSWNHLRGLGATAFAR), 246–259 (FLKVLDISHNGFGD), 274–294 (VLEELNMRNNRISVSGALKLG), 302–323 (TLRILIISKNPIRSDGCVGLLK), and 332–354 (ALELLDVSDIQVSRECEDLASSM). The interval 371–391 (KDWPQASTPSQPASAPSDSGL) is disordered. The span at 374 to 391 (PQASTPSQPASAPSDSGL) shows a compositional bias: low complexity.

This chain is Leucine-rich repeat-containing protein 74B, found in Mus musculus (Mouse).